The primary structure comprises 456 residues: Methionine aminopeptidase 2 (456 aa).

The span at 1–11 (MTIPVPKPAHP) shows a compositional bias: pro residues. Positions 1–127 (MTIPVPKPAH…SYRTTSSEKR (127 aa)) are disordered. The span at 31 to 45 (EADEEEDDDDEEGKE) shows a compositional bias: acidic residues. Over residues 66–79 (KKKKKKKKKPKKKK) the composition is skewed to basic residues. His209 provides a ligand contact to substrate. A divalent metal cation contacts are provided by Asp229, Asp240, and His309. Substrate is bound at residue His317. A divalent metal cation is bound by residues Glu343 and Glu437.

Belongs to the peptidase M24A family. Methionine aminopeptidase eukaryotic type 2 subfamily. Co(2+) serves as cofactor. Zn(2+) is required as a cofactor. The cofactor is Mn(2+). It depends on Fe(2+) as a cofactor.

The protein resides in the cytoplasm. It catalyses the reaction Release of N-terminal amino acids, preferentially methionine, from peptides and arylamides.. In terms of biological role, cotranslationally removes the N-terminal methionine from nascent proteins. The N-terminal methionine is often cleaved when the second residue in the primary sequence is small and uncharged (Met-Ala-, Cys, Gly, Pro, Ser, Thr, or Val). In Puccinia graminis f. sp. tritici (strain CRL 75-36-700-3 / race SCCL) (Black stem rust fungus), this protein is Methionine aminopeptidase 2.